Consider the following 93-residue polypeptide: Small ribosomal subunit protein uS19 (93 aa).

It belongs to the universal ribosomal protein uS19 family.

Protein S19 forms a complex with S13 that binds strongly to the 16S ribosomal RNA. The protein is Small ribosomal subunit protein uS19 of Acidothermus cellulolyticus (strain ATCC 43068 / DSM 8971 / 11B).